We begin with the raw amino-acid sequence, 642 residues long: Threonine--tRNA ligase (642 aa).

Residues 1–61 (MPVITLPDGS…ENDAQLSIIT (61 aa)) form the TGS domain. The interval 243–534 (DHRKIGKQLD…LTEEFAGFFP (292 aa)) is catalytic. Lysine 286 bears the N6-acetyllysine mark. 3 residues coordinate Zn(2+): cysteine 334, histidine 385, and histidine 511.

Belongs to the class-II aminoacyl-tRNA synthetase family. As to quaternary structure, homodimer. Requires Zn(2+) as cofactor.

It is found in the cytoplasm. It catalyses the reaction tRNA(Thr) + L-threonine + ATP = L-threonyl-tRNA(Thr) + AMP + diphosphate + H(+). In terms of biological role, catalyzes the attachment of threonine to tRNA(Thr) in a two-step reaction: L-threonine is first activated by ATP to form Thr-AMP and then transferred to the acceptor end of tRNA(Thr). Also edits incorrectly charged L-seryl-tRNA(Thr). In Escherichia coli O9:H4 (strain HS), this protein is Threonine--tRNA ligase.